A 437-amino-acid polypeptide reads, in one-letter code: 26S proteasome regulatory subunit 4 homolog (437 aa).

The disordered stretch occupies residues 1–47; sequence MGQGVSSGQDKKKKKGSNQKPKYEPPVQSKFGRKKRKGGPATAEKLP. Glycine 2 carries the N-myristoyl glycine lipid modification. Position 223–230 (223–230) interacts with ATP; it reads GAPGTGKT. Glycyl lysine isopeptide (Lys-Gly) (interchain with G-Cter in ubiquitin) cross-links involve residues lysine 234, lysine 255, and lysine 290.

The protein belongs to the AAA ATPase family.

The protein localises to the cytoplasm. The protein resides in the nucleus. Functionally, the 26S proteasome is involved in the ATP-dependent degradation of ubiquitinated proteins. The regulatory (or ATPase) complex confers ATP dependency and substrate specificity to the 26S complex. Has ATPase activity. This chain is 26S proteasome regulatory subunit 4 homolog (RPT2), found in Saccharomyces cerevisiae (strain ATCC 204508 / S288c) (Baker's yeast).